The sequence spans 274 residues: 3-methyl-2-oxobutanoate hydroxymethyltransferase (274 aa).

Mg(2+) is bound by residues aspartate 49 and aspartate 88. 3-methyl-2-oxobutanoate is bound by residues 49-50 (DS), aspartate 88, and lysine 118. Glutamate 120 contributes to the Mg(2+) binding site. The active-site Proton acceptor is glutamate 187.

It belongs to the PanB family. In terms of assembly, homodecamer; pentamer of dimers. Requires Mg(2+) as cofactor.

The protein localises to the cytoplasm. It catalyses the reaction 3-methyl-2-oxobutanoate + (6R)-5,10-methylene-5,6,7,8-tetrahydrofolate + H2O = 2-dehydropantoate + (6S)-5,6,7,8-tetrahydrofolate. The protein operates within cofactor biosynthesis; (R)-pantothenate biosynthesis; (R)-pantoate from 3-methyl-2-oxobutanoate: step 1/2. Its function is as follows. Catalyzes the reversible reaction in which hydroxymethyl group from 5,10-methylenetetrahydrofolate is transferred onto alpha-ketoisovalerate to form ketopantoate. In Rhodopseudomonas palustris (strain TIE-1), this protein is 3-methyl-2-oxobutanoate hydroxymethyltransferase.